Here is a 166-residue protein sequence, read N- to C-terminus: Lutropin subunit beta (166 aa).

Positions 1–21 are cleaved as a signal peptide; the sequence is MGGAQVLLLLTLLGTPLVTHG. 6 disulfide bridges follow: Cys56/Cys104, Cys70/Cys119, Cys73/Cys157, Cys81/Cys135, Cys85/Cys137, and Cys140/Cys147. An N-linked (GlcNAc...) asparagine glycan is attached at Asn60.

The protein belongs to the glycoprotein hormones subunit beta family. In terms of assembly, heterodimer of a common alpha chain and a unique beta chain which confers biological specificity to thyrotropin, lutropin, follitropin and gonadotropin.

The protein resides in the secreted. Promotes spermatogenesis and ovulation by stimulating the testes and ovaries to synthesize steroids. This chain is Lutropin subunit beta (LHB), found in Coturnix japonica (Japanese quail).